The primary structure comprises 293 residues: Shikimate kinase (293 aa).

Residue 87 to 97 participates in ATP binding; that stretch reads PLAGGLKSSSA.

Belongs to the GHMP kinase family. Archaeal shikimate kinase subfamily.

The protein resides in the cytoplasm. It catalyses the reaction shikimate + ATP = 3-phosphoshikimate + ADP + H(+). Its pathway is metabolic intermediate biosynthesis; chorismate biosynthesis; chorismate from D-erythrose 4-phosphate and phosphoenolpyruvate: step 5/7. The chain is Shikimate kinase from Methanosarcina mazei (strain ATCC BAA-159 / DSM 3647 / Goe1 / Go1 / JCM 11833 / OCM 88) (Methanosarcina frisia).